The primary structure comprises 569 residues: Lysine--tRNA ligase (569 aa).

Mg(2+) is bound by residues Glu-414 and Glu-421.

The protein belongs to the class-II aminoacyl-tRNA synthetase family. As to quaternary structure, homodimer. It depends on Mg(2+) as a cofactor.

The protein resides in the cytoplasm. The enzyme catalyses tRNA(Lys) + L-lysine + ATP = L-lysyl-tRNA(Lys) + AMP + diphosphate. The chain is Lysine--tRNA ligase from Christiangramia forsetii (strain DSM 17595 / CGMCC 1.15422 / KT0803) (Gramella forsetii).